The primary structure comprises 158 residues: Large ribosomal subunit protein uL11 (158 aa).

The tract at residues 1-21 is disordered; that stretch reads MAQSVKTMVEGGKATTGPPIG.

Belongs to the universal ribosomal protein uL11 family. As to quaternary structure, part of the ribosomal stalk of the 50S ribosomal subunit. Interacts with L10 and the large rRNA to form the base of the stalk. L10 forms an elongated spine to which L12 dimers bind in a sequential fashion forming a multimeric L10(L12)X complex.

Functionally, forms part of the ribosomal stalk which helps the ribosome interact with GTP-bound translation factors. The sequence is that of Large ribosomal subunit protein uL11 from Thermoplasma volcanium (strain ATCC 51530 / DSM 4299 / JCM 9571 / NBRC 15438 / GSS1).